Reading from the N-terminus, the 953-residue chain is Translation initiation factor IF-2 (953 aa).

Disordered regions lie at residues Ser-48–Ala-248 and Thr-279–Lys-363. Basic and acidic residues-rich tracts occupy residues Thr-80–Gln-89, Phe-98–Ala-111, and Gln-140–Lys-188. The span at Arg-191–Ser-207 shows a compositional bias: polar residues. The span at Arg-229–Ala-248 shows a compositional bias: basic and acidic residues. Residues Lys-282–Thr-291 are compositionally biased toward polar residues. The segment covering Ala-300–Lys-317 has biased composition (basic and acidic residues). The segment covering Ser-322–Asn-338 has biased composition (low complexity). Basic residues predominate over residues Lys-339–Asn-348. The 170-residue stretch at Glu-454–Lys-623 folds into the tr-type G domain. The interval Gly-463–Thr-470 is G1. Gly-463–Thr-470 lines the GTP pocket. The segment at Gly-488–His-492 is G2. The tract at residues Asp-509–Gly-512 is G3. Residues Asp-509–His-513 and Asn-563–Asp-566 each bind GTP. The interval Asn-563–Asp-566 is G4. The segment at Ser-599–Lys-601 is G5.

It belongs to the TRAFAC class translation factor GTPase superfamily. Classic translation factor GTPase family. IF-2 subfamily.

It is found in the cytoplasm. In terms of biological role, one of the essential components for the initiation of protein synthesis. Protects formylmethionyl-tRNA from spontaneous hydrolysis and promotes its binding to the 30S ribosomal subunits. Also involved in the hydrolysis of GTP during the formation of the 70S ribosomal complex. In Streptococcus pyogenes serotype M18 (strain MGAS8232), this protein is Translation initiation factor IF-2.